A 270-amino-acid chain; its full sequence is 3-phenylpropionate-dihydrodiol/cinnamic acid-dihydrodiol dehydrogenase (270 aa).

10–34 serves as a coordination point for NAD(+); that stretch reads FITGGGSGLGLALVERFIEEGAQVA. Substrate is bound at residue Ser-143. Tyr-156 (proton acceptor) is an active-site residue.

The protein belongs to the short-chain dehydrogenases/reductases (SDR) family.

The enzyme catalyses 3-(cis-5,6-dihydroxycyclohexa-1,3-dien-1-yl)propanoate + NAD(+) = 3-(2,3-dihydroxyphenyl)propanoate + NADH + H(+). It carries out the reaction (2E)-3-(cis-5,6-dihydroxycyclohexa-1,3-dien-1-yl)prop-2-enoate + NAD(+) = (2E)-3-(2,3-dihydroxyphenyl)prop-2-enoate + NADH + H(+). It participates in aromatic compound metabolism; 3-phenylpropanoate degradation. In terms of biological role, converts 3-phenylpropionate-dihydrodiol (PP-dihydrodiol) and cinnamic acid-dihydrodiol (CI-dihydrodiol) into 3-(2,3-dihydroxylphenyl)propanoic acid (DHPP) and 2,3-dihydroxicinnamic acid (DHCI), respectively. The chain is 3-phenylpropionate-dihydrodiol/cinnamic acid-dihydrodiol dehydrogenase from Escherichia coli O8 (strain IAI1).